The following is a 266-amino-acid chain: Phosphatidylglycerol--prolipoprotein diacylglyceryl transferase (266 aa).

7 consecutive transmembrane segments (helical) span residues 19-39, 61-81, 91-111, 125-145, 176-196, 204-224, and 237-257; these read IWGP…FAFA, LMFW…TLFY, LYLF…LGVI, FLQV…FGRI, PSQL…ILWF, GAVS…VEFF, and GMSM…ILMV. Arg-144 provides a ligand contact to a 1,2-diacyl-sn-glycero-3-phospho-(1'-sn-glycerol).

The protein belongs to the Lgt family.

It localises to the cell inner membrane. The enzyme catalyses L-cysteinyl-[prolipoprotein] + a 1,2-diacyl-sn-glycero-3-phospho-(1'-sn-glycerol) = an S-1,2-diacyl-sn-glyceryl-L-cysteinyl-[prolipoprotein] + sn-glycerol 1-phosphate + H(+). Its pathway is protein modification; lipoprotein biosynthesis (diacylglyceryl transfer). In terms of biological role, catalyzes the transfer of the diacylglyceryl group from phosphatidylglycerol to the sulfhydryl group of the N-terminal cysteine of a prolipoprotein, the first step in the formation of mature lipoproteins. This Idiomarina loihiensis (strain ATCC BAA-735 / DSM 15497 / L2-TR) protein is Phosphatidylglycerol--prolipoprotein diacylglyceryl transferase.